The sequence spans 40 residues: Ribosome-inactivating protein saporin-1 (40 aa).

The protein belongs to the ribosome-inactivating protein family. Type 1 RIP subfamily.

The enzyme catalyses Endohydrolysis of the N-glycosidic bond at one specific adenosine on the 28S rRNA.. Ribosome-inactivating protein of type 1, inhibits protein synthesis in animal cells. In Saponaria officinalis (Common soapwort), this protein is Ribosome-inactivating protein saporin-1 (SAP1).